Reading from the N-terminus, the 250-residue chain is Cell division protein ZapD (250 aa).

Belongs to the ZapD family. Interacts with FtsZ.

The protein resides in the cytoplasm. Cell division factor that enhances FtsZ-ring assembly. Directly interacts with FtsZ and promotes bundling of FtsZ protofilaments, with a reduction in FtsZ GTPase activity. This Pectobacterium atrosepticum (strain SCRI 1043 / ATCC BAA-672) (Erwinia carotovora subsp. atroseptica) protein is Cell division protein ZapD.